The primary structure comprises 421 residues: Tol-Pal system protein TolA (421 aa).

The Cytoplasmic portion of the chain corresponds to 1 to 13 (MSKATEQNDKLKR). Residues 14-34 (AIIISAVLHVILFAALIWSSF) traverse the membrane as a helical segment. At 35 to 421 (DENIEASAGG…FKNAPLDFKP (387 aa)) the chain is on the periplasmic side. The segment at 48-310 (SSIDAVMVDS…LSSGKNAPKT (263 aa)) is domain II (alpha-helical). The disordered stretch occupies residues 65–266 (KRMQSQESSA…KAAADKKAAA (202 aa)). 2 stretches are compositionally biased toward basic and acidic residues: residues 73-175 (SAKR…EAEA) and 206-266 (EARK…KAAA). 13 consecutive repeat copies span residues 224–229 (EKKAAA), 230–234 (EKAAA), 235–240 (DKKAAA), 241–245 (EKAAA), 246–250 (DKKAA), 251–255 (EKAAA), 256–260 (EKAAA), 261–266 (DKKAAA), 267–271 (EKAAA), 272–277 (DKKAAA), 278–282 (AKAAA), 283–287 (EKAAA), and 288–292 (AKAAA). Residues 224 to 292 (EKKAAAEKAA…EKAAAAKAAA (69 aa)) are 13 X tandem repeats of [EDA]-K(1,2)-A(2,4). Residues 300–336 (ELSSGKNAPKTGGGAKGNNASPAGSGNTKNNGASGAD) are disordered. The domain III (functional) stretch occupies residues 311 to 421 (GGGAKGNNAS…FKNAPLDFKP (111 aa)). Polar residues predominate over residues 317 to 332 (NNASPAGSGNTKNNGA). A disulfide bridge connects residues Cys363 and Cys388.

Belongs to the TolA family. As to quaternary structure, the Tol-Pal system is composed of five core proteins: the inner membrane proteins TolA, TolQ and TolR, the periplasmic protein TolB and the outer membrane protein Pal. They form a network linking the inner and outer membranes and the peptidoglycan layer. TolA interacts with TolQ and TolR via its N-terminal domain. Interacts with CpoB, and with the trimeric porins OmpC, OmpF, PhoE and LamB via its central domain. Interacts with TolB via its C-terminal domain. Also interacts with Pal via its C-terminal domain. This interaction is proton motive force dependent and requires TolQ and TolR.

It localises to the cell inner membrane. Part of the Tol-Pal system, which plays a role in outer membrane invagination during cell division and is important for maintaining outer membrane integrity. The Tol-Pal system is also required for polar localization of chemoreceptors clusters. The system also appears to be required for the activity of several outer membrane-localized enzymes with cell wall remodeling activity. Is involved in the uptake of group A colicins (colicins A, E1, E2, E3, and K) and in the uptake of filamentous phage DNA. The chain is Tol-Pal system protein TolA from Escherichia coli (strain K12).